Here is a 353-residue protein sequence, read N- to C-terminus: Ion-translocating oxidoreductase complex subunit D (353 aa).

3 helical membrane passes run 20-39, 68-88, and 129-149; these read LMRL…WYFF, PISH…LGIC, and VMLL…LTLV. Threonine 187 is subject to FMN phosphoryl threonine. Transmembrane regions (helical) follow at residues 215 to 235, 238 to 258, 267 to 287, and 300 to 320; these read LALG…FLIS, AIAW…SFIG, ASTM…FILT, and IIVG…GGYP.

It belongs to the NqrB/RnfD family. As to quaternary structure, the complex is composed of six subunits: RnfA, RnfB, RnfC, RnfD, RnfE and RnfG. FMN is required as a cofactor.

The protein localises to the cell inner membrane. Part of a membrane-bound complex that couples electron transfer with translocation of ions across the membrane. This is Ion-translocating oxidoreductase complex subunit D from Colwellia psychrerythraea (strain 34H / ATCC BAA-681) (Vibrio psychroerythus).